The sequence spans 360 residues: Phospho-N-acetylmuramoyl-pentapeptide-transferase (360 aa).

Helical transmembrane passes span 26-46, 72-92, 94-114, 132-152, 168-188, 199-219, 236-256, 263-283, 288-308, and 338-358; these read AIVSLLTALFISLWMGPRMIA, PTMGGIMILTAIVVSVLLWAY, SNPYVWCVLTVLIGYGIIGFV, WKYFWMSVIALGVAFALYLAG, VMPQLGLFYILLAYFVIVGTG, GLAIMPTVFVAGGFALVAWAT, AGELVIVCTAIVGAGLGFLWF, VFMGDVGSLALGGALGIIAVL, FLLVIMGGVFVVETLSVILQV, and VIVRFWIISLMLVLIGLATLK.

It belongs to the glycosyltransferase 4 family. MraY subfamily. Requires Mg(2+) as cofactor.

Its subcellular location is the cell inner membrane. The catalysed reaction is UDP-N-acetyl-alpha-D-muramoyl-L-alanyl-gamma-D-glutamyl-meso-2,6-diaminopimeloyl-D-alanyl-D-alanine + di-trans,octa-cis-undecaprenyl phosphate = di-trans,octa-cis-undecaprenyl diphospho-N-acetyl-alpha-D-muramoyl-L-alanyl-D-glutamyl-meso-2,6-diaminopimeloyl-D-alanyl-D-alanine + UMP. Its pathway is cell wall biogenesis; peptidoglycan biosynthesis. Functionally, catalyzes the initial step of the lipid cycle reactions in the biosynthesis of the cell wall peptidoglycan: transfers peptidoglycan precursor phospho-MurNAc-pentapeptide from UDP-MurNAc-pentapeptide onto the lipid carrier undecaprenyl phosphate, yielding undecaprenyl-pyrophosphoryl-MurNAc-pentapeptide, known as lipid I. This chain is Phospho-N-acetylmuramoyl-pentapeptide-transferase, found in Enterobacter sp. (strain 638).